The chain runs to 286 residues: MLIALLLISYQLIKHGYRAADIKNLYTILEGEELRRQKDLSAKLRWGIVDEILWTIIVANGAILFTAHYVLIGLKILDLIAIFVVMLSGVMLYAPLAFLFLYPVVRAFEKNFPPSNPQFLLSHGLICTVSSLIVYEKLEQLWWDPLLVGFFWIAAGFVSFFTNRRFEVLVFLLLIAPLALLSVKCPGAILPILLAKSECSLRIQATFLVKLAVLIFASLAAVALVLQVFGYKSLRELSEKRKAAIKQGKYNPLRDPIIWIAWIMLTSLGLLIASFMERGEISPNML.

Helical transmembrane passes span isoleucine 52–leucine 74, leucine 79–leucine 101, tryptophan 142–phenylalanine 161, valine 168–leucine 190, isoleucine 203–valine 225, and isoleucine 257–methionine 276.

It is found in the cell membrane. This is an uncharacterized protein from Archaeoglobus fulgidus (strain ATCC 49558 / DSM 4304 / JCM 9628 / NBRC 100126 / VC-16).